The sequence spans 215 residues: Thymidylate kinase (215 aa).

ATP is bound at residue 12–19 (GLEGAGKT).

The protein belongs to the thymidylate kinase family.

It catalyses the reaction dTMP + ATP = dTDP + ADP. Functionally, phosphorylation of dTMP to form dTDP in both de novo and salvage pathways of dTTP synthesis. The chain is Thymidylate kinase from Halorhodospira halophila (strain DSM 244 / SL1) (Ectothiorhodospira halophila (strain DSM 244 / SL1)).